The following is a 181-amino-acid chain: ATP-dependent protease subunit HslV (181 aa).

T7 is an active-site residue. 3 residues coordinate Na(+): G166, C169, and T172.

The protein belongs to the peptidase T1B family. HslV subfamily. In terms of assembly, a double ring-shaped homohexamer of HslV is capped on each side by a ring-shaped HslU homohexamer. The assembly of the HslU/HslV complex is dependent on binding of ATP.

It is found in the cytoplasm. It carries out the reaction ATP-dependent cleavage of peptide bonds with broad specificity.. With respect to regulation, allosterically activated by HslU binding. Functionally, protease subunit of a proteasome-like degradation complex believed to be a general protein degrading machinery. This chain is ATP-dependent protease subunit HslV, found in Acidovorax ebreus (strain TPSY) (Diaphorobacter sp. (strain TPSY)).